A 338-amino-acid chain; its full sequence is Ornithine carbamoyltransferase (338 aa).

Carbamoyl phosphate is bound by residues 56–59 (STRT), R107, and 134–137 (HPTQ). Residues N168, D232, and 236-237 (SM) each bind L-ornithine. Residues 274-275 (CL) and R320 each bind carbamoyl phosphate.

This sequence belongs to the aspartate/ornithine carbamoyltransferase superfamily. OTCase family.

The protein localises to the cytoplasm. It catalyses the reaction carbamoyl phosphate + L-ornithine = L-citrulline + phosphate + H(+). The protein operates within amino-acid biosynthesis; L-arginine biosynthesis; L-arginine from L-ornithine and carbamoyl phosphate: step 1/3. Reversibly catalyzes the transfer of the carbamoyl group from carbamoyl phosphate (CP) to the N(epsilon) atom of ornithine (ORN) to produce L-citrulline. This Buchnera aphidicola subsp. Acyrthosiphon pisum (strain APS) (Acyrthosiphon pisum symbiotic bacterium) protein is Ornithine carbamoyltransferase (argI).